The primary structure comprises 199 residues: MRLTAKQITWLKVCLHLAGFLPLLWLFWAINHGGLSADPVKDIQHFTGRTALKFLLATLLVSPLARYAKQPLLIRTRRLLGLWCFVWATLHLTSYALLELGIHNLALLGSELISRPYLTLGIISWLVLLALTLTSTQFAQRKLGKRWQTLHNVVYLVAILAPIHYLWSVKILSPQPVIYAALALALLALRYRRFRQWWR.

Transmembrane regions (helical) follow at residues 10-30 (WLKV…FWAI), 82-102 (LWCF…ELGI), 116-136 (PYLT…LTST), and 153-173 (VVYL…KILS).

It belongs to the MsrQ family. Heterodimer of a catalytic subunit (MsrP) and a heme-binding subunit (MsrQ). FMN serves as cofactor. The cofactor is heme b.

Its subcellular location is the cell inner membrane. Functionally, part of the MsrPQ system that repairs oxidized periplasmic proteins containing methionine sulfoxide residues (Met-O), using respiratory chain electrons. Thus protects these proteins from oxidative-stress damage caused by reactive species of oxygen and chlorine generated by the host defense mechanisms. MsrPQ is essential for the maintenance of envelope integrity under bleach stress, rescuing a wide series of structurally unrelated periplasmic proteins from methionine oxidation, including the primary periplasmic chaperone SurA and the lipoprotein Pal. MsrQ provides electrons for reduction to the reductase catalytic subunit MsrP, using the quinone pool of the respiratory chain. The protein is Protein-methionine-sulfoxide reductase heme-binding subunit MsrQ of Salmonella enteritidis PT4 (strain P125109).